A 265-amino-acid polypeptide reads, in one-letter code: Transmembrane protein 270 (265 aa).

Helical transmembrane passes span 72 to 92, 130 to 150, and 185 to 205; these read PLGQ…WLVL, LFLS…VVTW, and LYWW…YLIT. The disordered stretch occupies residues 229 to 265; that stretch reads QEVEPQEVSGSSLLPSLSASSDSESGTVLPEQETPRE. The span at 237–253 shows a compositional bias: low complexity; sequence SGSSLLPSLSASSDSES.

Its subcellular location is the membrane. This is Transmembrane protein 270 from Homo sapiens (Human).